The primary structure comprises 1440 residues: Genome polyprotein (1440 aa).

A propeptide spans 32–53 (ER anchor for the capsid protein C, removed in mature form by serine protease NS3); it reads GGNEGSIMWLASLAVVIACAGA. The helical transmembrane segment at 36-56 threads the bilayer; that stretch reads GSIMWLASLAVVIACAGAMKL. Topologically, residues 57 to 180 are extracellular; it reads SNFQGKLLMT…ATRYLMKTEN (124 aa). Asn68 carries N-linked (GlcNAc...) asparagine; by host glycosylation. Residues 181 to 201 form a helical membrane-spanning segment; it reads WIVRNPGYAFLAAILGWMLGS. Residues 202 to 207 lie on the Cytoplasmic side of the membrane; sequence NNGQRR. The chain crosses the membrane as a helical span at residues 208 to 222; it reads WYFTILLLLVAPAYS. At 223–674 the chain is on the extracellular side; sequence FNCLGMGNRD…QVFGGAFRTL (452 aa). 6 disulfide bridges follow: Cys225-Cys252, Cys282-Cys338, Cys282-Cys343, Cys296-Cys327, Cys314-Cys338, and Cys314-Cys343. Residues 320 to 333 form a fusion peptide region; the sequence is DRGWGNGCGLFGKG. Asn376 is a glycosylation site (N-linked (GlcNAc...) asparagine; by host). 2 cysteine pairs are disulfide-bonded: Cys412–Cys509 and Cys526–Cys557. Residues 675–695 traverse the membrane as a helical segment; the sequence is FGGMSWITQGLMGALLLWMGV. The Cytoplasmic portion of the chain corresponds to 696-701; the sequence is NARDRS. Residues 702 to 722 form a helical membrane-spanning segment; sequence IALAFLATGGVLVFLATNVHA. The Extracellular segment spans residues 723–1147; that stretch reads DTGCAIDITR…AFAEANSGGD (425 aa). 6 cysteine pairs are disulfide-bonded: Cys726/Cys737, Cys777/Cys865, Cys901/Cys945, Cys1002/Cys1051, Cys1013/Cys1034, and Cys1035/Cys1038. N-linked (GlcNAc...) asparagine; by host glycosylation is found at Asn852 and Asn929. The chain crosses the membrane as a helical span at residues 1148–1168; the sequence is VLHLALIAVFKIQPAFLVMNM. At 1169–1178 the chain is on the cytoplasmic side; the sequence is LSTRWTNQEN. The chain crosses the membrane as a helical span at residues 1179-1199; it reads VVLVLGAAFFHLASVDLQIGV. Position 1200 (His1200) is a topological domain, lumenal. The helical transmembrane segment at 1201–1221 threads the bilayer; the sequence is GILNAAAIAWMIVRAITFPTT. Topologically, residues 1222–1237 are cytoplasmic; the sequence is SSVTMPVLALLTPGMR. Residues 1238 to 1258 traverse the membrane as a helical segment; it reads ALYLDTYRIILLVIGICSLLQ. The Lumenal segment spans residues 1259 to 1269; sequence ERKKTMAKKKG. Residues 1270-1290 form a helical membrane-spanning segment; that stretch reads AVLLGLALTSTGWFSPTTIAA. Residues 1291–1302 lie on the Cytoplasmic side of the membrane; that stretch reads GLMVCNPNKKRG. Residues 1303–1323 traverse the membrane as a helical segment; it reads WPATEFLSAVGLMFAIVGGLA. At 1324–1326 the chain is on the lumenal side; it reads ELD. Residues 1327–1347 form a helical membrane-spanning segment; that stretch reads IESMSIPFMLAGLMAVSYVVS. At 1348–1404 the chain is on the cytoplasmic side; it reads GKATDMWLERAADISWEMDAAITGSSRRLDVKLDDDGDFHLIDDPGVPWKVWVLRMS. Residues 1355 to 1394 are interacts with and activates NS3 protease; sequence LERAADISWEMDAAITGSSRRLDVKLDDDGDFHLIDDPGV. The segment at residues 1405 to 1425 is an intramembrane region (helical); that stretch reads CIGLAALTPWAIVPAAFGYWL. Topologically, residues 1426 to 1440 are cytoplasmic; sequence TLKTTKRGGVFWDTP.

Homodimer. Interacts (via N-terminus) with host EXOC1 (via C-terminus); this interaction results in EXOC1 degradation through the proteasome degradation pathway. In terms of assembly, forms heterodimers with envelope protein E in the endoplasmic reticulum and Golgi. As to quaternary structure, homodimer; in the endoplasmic reticulum and Golgi. Interacts with protein prM. Interacts with non-structural protein 1. Homodimer; Homohexamer when secreted. Interacts with envelope protein E. NS1 interacts with NS4B. Interacts with host complement protein CFH; this interaction leads to the degradation of C3. In terms of assembly, interacts (via N-terminus) with serine protease NS3. As to quaternary structure, forms a heterodimer with serine protease NS3. May form homooligomers. Forms a heterodimer with NS2B. Interacts with non-structural protein 2A (via N-terminus). Interacts with NS4B. Interacts with unphosphorylated RNA-directed RNA polymerase NS5; this interaction stimulates RNA-directed RNA polymerase NS5 guanylyltransferase activity. Mn(2+) is required as a cofactor. Mg(2+) serves as cofactor. Specific enzymatic cleavages in vivo yield mature proteins. Cleavages in the lumen of endoplasmic reticulum are performed by host signal peptidase, whereas cleavages in the cytoplasmic side are performed by serine protease NS3. Signal cleavage at the 2K-4B site requires a prior NS3 protease-mediated cleavage at the 4A-2K site. Post-translationally, cleaved in post-Golgi vesicles by a host furin, releasing the mature small envelope protein M, and peptide pr. This cleavage is incomplete as up to 30% of viral particles still carry uncleaved prM. In terms of processing, N-glycosylated. N-glycosylated. The excreted form is glycosylated and this is required for efficient secretion of the protein from infected cells. Post-translationally, RNA-directed RNA polymerase NS5: Phosphorylated on serines residues. This phosphorylation may trigger NS5 nuclear localization.

It is found in the virion. The protein resides in the host nucleus. It localises to the host cytoplasm. The protein localises to the host perinuclear region. Its subcellular location is the secreted. It is found in the virion membrane. The protein resides in the host endoplasmic reticulum membrane. The catalysed reaction is Selective hydrolysis of -Xaa-Xaa-|-Yaa- bonds in which each of the Xaa can be either Arg or Lys and Yaa can be either Ser or Ala.. The enzyme catalyses a ribonucleoside 5'-triphosphate + H2O = a ribonucleoside 5'-diphosphate + phosphate + H(+). It catalyses the reaction ATP + H2O = ADP + phosphate + H(+). In terms of biological role, plays a role in virus budding by binding to the cell membrane and gathering the viral RNA into a nucleocapsid that forms the core of a mature virus particle. During virus entry, may induce genome penetration into the host cytoplasm after hemifusion induced by the surface proteins. Can migrate to the cell nucleus where it modulates host functions. Overcomes the anti-viral effects of host EXOC1 by sequestering and degrading the latter through the proteasome degradation pathway. Functionally, inhibits RNA silencing by interfering with host Dicer. Prevents premature fusion activity of envelope proteins in trans-Golgi by binding to envelope protein E at pH 6.0. After virion release in extracellular space, gets dissociated from E dimers. Its function is as follows. Acts as a chaperone for envelope protein E during intracellular virion assembly by masking and inactivating envelope protein E fusion peptide. prM is the only viral peptide matured by host furin in the trans-Golgi network probably to avoid catastrophic activation of the viral fusion activity in acidic Golgi compartment prior to virion release. prM-E cleavage is inefficient, and many virions are only partially matured. These uncleaved prM would play a role in immune evasion. In terms of biological role, may play a role in virus budding. Exerts cytotoxic effects by activating a mitochondrial apoptotic pathway through M ectodomain. May display a viroporin activity. Functionally, binds to host cell surface receptor and mediates fusion between viral and cellular membranes. Envelope protein is synthesized in the endoplasmic reticulum in the form of heterodimer with protein prM. They play a role in virion budding in the ER, and the newly formed immature particle is covered with 60 spikes composed of heterodimer between precursor prM and envelope protein E. The virion is transported to the Golgi apparatus where the low pH causes dissociation of PrM-E heterodimers and formation of E homodimers. prM-E cleavage is inefficient, and many virions are only partially matured. These uncleaved prM would play a role in immune evasion. Involved in immune evasion, pathogenesis and viral replication. Once cleaved off the polyprotein, is targeted to three destinations: the viral replication cycle, the plasma membrane and the extracellular compartment. Essential for viral replication. Required for formation of the replication complex and recruitment of other non-structural proteins to the ER-derived membrane structures. Excreted as a hexameric lipoparticle that plays a role against host immune response. Antagonizing the complement function. Binds to the host macrophages and dendritic cells. Inhibits signal transduction originating from Toll-like receptor 3 (TLR3). Its function is as follows. Component of the viral RNA replication complex that functions in virion assembly and antagonizes the host alpha/beta interferon antiviral response. In terms of biological role, required cofactor for the serine protease function of NS3. May have membrane-destabilizing activity and form viroporins. Functionally, displays three enzymatic activities: serine protease, NTPase and RNA helicase. NS3 serine protease, in association with NS2B, performs its autocleavage and cleaves the polyprotein at dibasic sites in the cytoplasm: C-prM, NS2A-NS2B, NS2B-NS3, NS3-NS4A, NS4A-2K and NS4B-NS5. NS3 RNA helicase binds RNA and unwinds dsRNA in the 3' to 5' direction. Non-structural protein 4A: Regulates the ATPase activity of the NS3 helicase activity. NS4A allows NS3 helicase to conserve energy during unwinding. Its function is as follows. Peptide 2k: Functions as a signal peptide for NS4B and is required for the interferon antagonism activity of the latter. In terms of biological role, non-structural protein 4B: Induces the formation of ER-derived membrane vesicles where the viral replication takes place. Inhibits interferon (IFN)-induced host STAT1 phosphorylation and nuclear translocation, thereby preventing the establishment of cellular antiviral state by blocking the IFN-alpha/beta pathway. Inhibits STAT2 translocation in the nucleus after IFN-alpha treatment. Functionally, RNA-directed RNA polymerase NS5: Replicates the viral (+) and (-) RNA genome. Performs the capping of genomes in the cytoplasm. NS5 methylates viral RNA cap at guanine N-7 and ribose 2'-O positions. Besides its role in RNA genome replication, also prevents the establishment of cellular antiviral state by blocking the interferon-alpha/beta (IFN-alpha/beta) signaling pathway. Inhibits host TYK2 and STAT2 phosphorylation, thereby preventing activation of JAK-STAT signaling pathway. The sequence is that of Genome polyprotein from Japanese encephalitis virus (strain Nakayama) (JEV).